Here is a 442-residue protein sequence, read N- to C-terminus: UDP-N-acetylmuramoylalanine--D-glutamate ligase (442 aa).

Residue 115-121 (GSNGKST) participates in ATP binding.

This sequence belongs to the MurCDEF family.

It is found in the cytoplasm. The catalysed reaction is UDP-N-acetyl-alpha-D-muramoyl-L-alanine + D-glutamate + ATP = UDP-N-acetyl-alpha-D-muramoyl-L-alanyl-D-glutamate + ADP + phosphate + H(+). The protein operates within cell wall biogenesis; peptidoglycan biosynthesis. Functionally, cell wall formation. Catalyzes the addition of glutamate to the nucleotide precursor UDP-N-acetylmuramoyl-L-alanine (UMA). The sequence is that of UDP-N-acetylmuramoylalanine--D-glutamate ligase from Vibrio vulnificus (strain YJ016).